Reading from the N-terminus, the 86-residue chain is YcgL domain-containing protein XCC3997 (86 aa).

The region spanning M1 to C83 is the YcgL domain.

This chain is YcgL domain-containing protein XCC3997, found in Xanthomonas campestris pv. campestris (strain ATCC 33913 / DSM 3586 / NCPPB 528 / LMG 568 / P 25).